The sequence spans 212 residues: Ribosomal RNA small subunit methyltransferase G (212 aa).

Residues Gly-72, Leu-77, 123–124 (VE), and Arg-138 contribute to the S-adenosyl-L-methionine site.

This sequence belongs to the methyltransferase superfamily. RNA methyltransferase RsmG family.

The protein resides in the cytoplasm. It catalyses the reaction guanosine(527) in 16S rRNA + S-adenosyl-L-methionine = N(7)-methylguanosine(527) in 16S rRNA + S-adenosyl-L-homocysteine. Specifically methylates the N7 position of guanine in position 527 of 16S rRNA. The chain is Ribosomal RNA small subunit methyltransferase G from Histophilus somni (strain 2336) (Haemophilus somnus).